The primary structure comprises 922 residues: Probable outer membrane protein pmp1 (922 aa).

A signal peptide spans 1–26 (MRFSLCGFPLVFSFTLLSVFDTSLSA). Positions 620-922 (SLQTDRGLWI…NINCGSKFRF (303 aa)) constitute an Autotransporter domain.

The protein belongs to the PMP outer membrane protein family.

The protein localises to the secreted. It is found in the cell wall. Its subcellular location is the cell outer membrane. The sequence is that of Probable outer membrane protein pmp1 (pmp1) from Chlamydia pneumoniae (Chlamydophila pneumoniae).